A 461-amino-acid polypeptide reads, in one-letter code: ATP synthase subunit beta (461 aa).

Residue 151-158 coordinates ATP; that stretch reads GGAGVGKT.

This sequence belongs to the ATPase alpha/beta chains family. As to quaternary structure, F-type ATPases have 2 components, CF(1) - the catalytic core - and CF(0) - the membrane proton channel. CF(1) has five subunits: alpha(3), beta(3), gamma(1), delta(1), epsilon(1). CF(0) has three main subunits: a(1), b(2) and c(9-12). The alpha and beta chains form an alternating ring which encloses part of the gamma chain. CF(1) is attached to CF(0) by a central stalk formed by the gamma and epsilon chains, while a peripheral stalk is formed by the delta and b chains.

Its subcellular location is the cell inner membrane. The catalysed reaction is ATP + H2O + 4 H(+)(in) = ADP + phosphate + 5 H(+)(out). In terms of biological role, produces ATP from ADP in the presence of a proton gradient across the membrane. The catalytic sites are hosted primarily by the beta subunits. The chain is ATP synthase subunit beta from Coxiella burnetii (strain RSA 331 / Henzerling II).